The sequence spans 155 residues: Small ribosomal subunit protein uS7cz/uS7cy (155 aa).

It belongs to the universal ribosomal protein uS7 family. As to quaternary structure, part of the 30S ribosomal subunit.

It localises to the plastid. Its subcellular location is the chloroplast. Functionally, one of the primary rRNA binding proteins, it binds directly to 16S rRNA where it nucleates assembly of the head domain of the 30S subunit. The polypeptide is Small ribosomal subunit protein uS7cz/uS7cy (rps7-A) (Jasminum nudiflorum (Winter jasmine)).